Here is a 275-residue protein sequence, read N- to C-terminus: MPELPEVETVRRGLETLVLGQEIVAVTLKVPKMVKTDLETFALTLPGQIIQSVGRRGKYLLIDLGQLVLVSHLRMEGKYLLFPDEVPDNKHFHVFFELKNGSTLVYQDVRKFGTFDLIAKSQLSAFFAKRKLGPEPKKETFKLKTFEAALLSSQKPIKPHLLDQTLVAGLGNIYVDEVLWAAKVHPGTASSRLNKAEIKRLHDETIRILALGIEKGGSTVRTYRNALGADGTMQDYLQVYGQTGKPCPRCGQAIVKLKVGGRGTHICPKCQKKRP.

P2 functions as the Schiff-base intermediate with DNA in the catalytic mechanism. E3 serves as the catalytic Proton donor. Catalysis depends on K58, which acts as the Proton donor; for beta-elimination activity. H91 and R110 together coordinate DNA. The FPG-type zinc-finger motif lies at 238–272 (QVYGQTGKPCPRCGQAIVKLKVGGRGTHICPKCQK). R262 serves as the catalytic Proton donor; for delta-elimination activity.

The protein belongs to the FPG family. In terms of assembly, monomer. It depends on Zn(2+) as a cofactor.

It carries out the reaction Hydrolysis of DNA containing ring-opened 7-methylguanine residues, releasing 2,6-diamino-4-hydroxy-5-(N-methyl)formamidopyrimidine.. The catalysed reaction is 2'-deoxyribonucleotide-(2'-deoxyribose 5'-phosphate)-2'-deoxyribonucleotide-DNA = a 3'-end 2'-deoxyribonucleotide-(2,3-dehydro-2,3-deoxyribose 5'-phosphate)-DNA + a 5'-end 5'-phospho-2'-deoxyribonucleoside-DNA + H(+). Its function is as follows. Involved in base excision repair of DNA damaged by oxidation or by mutagenic agents. Acts as a DNA glycosylase that recognizes and removes damaged bases. Has a preference for oxidized purines, such as 7,8-dihydro-8-oxoguanine (8-oxoG). Has AP (apurinic/apyrimidinic) lyase activity and introduces nicks in the DNA strand. Cleaves the DNA backbone by beta-delta elimination to generate a single-strand break at the site of the removed base with both 3'- and 5'-phosphates. The polypeptide is Formamidopyrimidine-DNA glycosylase (Streptococcus pyogenes serotype M28 (strain MGAS6180)).